The chain runs to 565 residues: Coiled-coil domain-containing protein 17 (565 aa).

The tract at residues 58–87 (IMAQEKSRDQEASTSALKRLTEETAGSPGE) is disordered. Coiled-coil stretches lie at residues 97 to 160 (ARRM…TLGA) and 219 to 271 (LQLQ…KVLS).

This is Coiled-coil domain-containing protein 17 (Ccdc17) from Mus musculus (Mouse).